A 581-amino-acid chain; its full sequence is Arginine--tRNA ligase (581 aa).

The short motif at 126–136 is the 'HIGH' region element; sequence PNLAKEMHVGH.

Belongs to the class-I aminoacyl-tRNA synthetase family. Monomer.

It localises to the cytoplasm. The catalysed reaction is tRNA(Arg) + L-arginine + ATP = L-arginyl-tRNA(Arg) + AMP + diphosphate. The chain is Arginine--tRNA ligase from Shewanella loihica (strain ATCC BAA-1088 / PV-4).